The chain runs to 962 residues: Glutamate receptor 1 (962 aa).

The first 25 residues, 1 to 25, serve as a signal peptide directing secretion; the sequence is MFSSFSFLNMFGVLFTVFNLTVVQP. Topologically, residues 26-591 are extracellular; the sequence is YPSHIIIKSF…SVFSFMQPLS (566 aa). N-linked (GlcNAc...) asparagine glycosylation is found at N190, N220, N275, N333, N441, and N482. Residues 592–612 form a helical membrane-spanning segment; the sequence is TEIWMYIIFAYIGVSVVIFLV. The Cytoplasmic segment spans residues 613–668; the sequence is SRFSPYEWRVEETSRGGFTISNDFSVYNCLWFTLAAFMQQGTDILPRSISGRIASS. The chain crosses the membrane as a helical span at residues 669-689; it reads AWWFFTMIIVSSYTANLAAFL. The Extracellular segment spans residues 690–855; the sequence is TLEKMQAPIE…GSSASLNLSK (166 aa). An N-linked (GlcNAc...) asparagine glycan is attached at N852. A helical transmembrane segment spans residues 856–876; it reads VAGIFYILMGGMVISMLAALG. At 877–962 the chain is on the cytoplasmic side; sequence EFLYRSRIEA…PANTLYNTAV (86 aa).

Belongs to the glutamate-gated ion channel (TC 1.A.10.1) family. As to quaternary structure, interacts with sol-1. Interacts with cni-1; the interaction negatively regulates export of glr-1 from the endoplasmic reticulum to synapses. Interacts with usp-46; the interaction results in deubiquitination of glr-1. Post-translationally, ubiquitinated. Deubiquitinated by usp-46 which prevents its degradation. In terms of processing, glycosylated. Command interneurons of the locomotory control circuit (AIB, AVA, AVB, AVD, AVE and PVC) and motor neurons (RMD, RIM, SMD, AVG, PVQ and URY).

It is found in the postsynaptic cell membrane. Its subcellular location is the endoplasmic reticulum. The protein resides in the synapse. It localises to the cell membrane. The protein localises to the recycling endosome. It is found in the cell projection. Its subcellular location is the dendrite. The protein resides in the perikaryon. Its function is as follows. Non-NMDA (N-methyl-D-aspartate) ionotropic glutamate receptor. L-glutamate acts as an excitatory neurotransmitter at many synapses in the central nervous system. The postsynaptic actions of glutamate are mediated by a variety of receptors that are named according to their selective agonists. May contribute to a sensory discrimination between mechanical and chemical stimuli. Plays a role in controlling movement in response to environmental cues such as food availability and mechanosensory stimulation such as the nose touch response. In AIB interneurons, promotes omega turns, a movement that frequently follows backwards locomotion or 'reversals' in response to environmental cues while possibly playing an inhibitory role in alternative neurons to inhibit omega turns. This is Glutamate receptor 1 from Caenorhabditis elegans.